The sequence spans 32 residues: Cytochrome b6-f complex subunit 7 (32 aa).

Residues 9-27 form a helical membrane-spanning segment; it reads AVLSSVLVLVGLAIGFLLL.

Belongs to the PetM family. In terms of assembly, the 4 large subunits of the cytochrome b6-f complex are cytochrome b6, subunit IV (17 kDa polypeptide, PetD), cytochrome f and the Rieske protein, while the 4 small subunits are PetG, PetL, PetM and PetN. The complex functions as a dimer.

The protein resides in the plastid. It is found in the chloroplast thylakoid membrane. Component of the cytochrome b6-f complex, which mediates electron transfer between photosystem II (PSII) and photosystem I (PSI), cyclic electron flow around PSI, and state transitions. This Pyropia yezoensis (Susabi-nori) protein is Cytochrome b6-f complex subunit 7.